The chain runs to 367 residues: MTTYAPGVPPQNRNPQSIGFLLLDNFTLISLASAVEPLRMANQLSGRELYRWHTLSLDGRQVWASDGLQITPDAGTDNAPAVDCVIVCGGVGIQRSVTREHVTFLQAQARQGRRLGAVCTGSWALARAGLLDGYDCSVHWECLAAMQEAFPRVAMSTRLFSIDRNRFTSSGGTAPMDMMLHLIGREHGRELSAAISEMFIYERIRNEQDHQRVPLKHMLGTNQPKLQEIVALMEANLEEPIDLDELAVYVNVSRRQLERLFQKYLHCSPSRYYLKLRLIRARQLLKQTSMSIIEVASVCGFVSTPHFSKCYREYFGIPPRDERQGQPLGQPVVLMPIPQDLALMPNSSALSALSQAQGESTFASVRI.

The HTH araC/xylS-type domain maps to 227–325 (QEIVALMEAN…GIPPRDERQG (99 aa)). 2 consecutive DNA-binding regions (H-T-H motif) follow at residues 244–265 (DELAVYVNVSRRQLERLFQKYL) and 292–315 (IIEVASVCGFVSTPHFSKCYREYF).

In terms of biological role, specific regulator of choline metabolism, which activates transcription of at least 25 genes from 11 promoters in response to choline metabolites. Required for the induction of plcH, encoding the phospholipase C, and pchP, encoding the phosphorylcholine phosphatase, in response to glycine betaine (GB) and dimethylglycine (DMG). Also controls the expression of gbcAB and dgcAB, which are required for GB and DMG degradation, respectively, in response to both GB and DMG. The GbdR regulon also includes genes encoding sarcosine, glycine and serine catabolic enzymes, the BetX and CbcXWV quaternary amine transport proteins and the acetylcholine esterase gene, choE. Acts by binding directly to the promoter region of the genes. May play an important role during P.aeruginosa interactions with eukaryotes. The polypeptide is HTH-type transcriptional regulator GbdR (Pseudomonas aeruginosa (strain UCBPP-PA14)).